A 157-amino-acid chain; its full sequence is SsrA-binding protein (157 aa).

This sequence belongs to the SmpB family.

It is found in the cytoplasm. In terms of biological role, required for rescue of stalled ribosomes mediated by trans-translation. Binds to transfer-messenger RNA (tmRNA), required for stable association of tmRNA with ribosomes. tmRNA and SmpB together mimic tRNA shape, replacing the anticodon stem-loop with SmpB. tmRNA is encoded by the ssrA gene; the 2 termini fold to resemble tRNA(Ala) and it encodes a 'tag peptide', a short internal open reading frame. During trans-translation Ala-aminoacylated tmRNA acts like a tRNA, entering the A-site of stalled ribosomes, displacing the stalled mRNA. The ribosome then switches to translate the ORF on the tmRNA; the nascent peptide is terminated with the 'tag peptide' encoded by the tmRNA and targeted for degradation. The ribosome is freed to recommence translation, which seems to be the essential function of trans-translation. In Chlorobium chlorochromatii (strain CaD3), this protein is SsrA-binding protein.